Here is a 71-residue protein sequence, read N- to C-terminus: Conotoxin Bu24 (71 aa).

Residues 1-21 form the signal peptide; the sequence is MGMRMMVTVFLLVVLATTVVS. Residues 22–44 constitute a propeptide that is removed on maturation; that stretch reads LRSNRASDGRRGIVNKLNDLVPK. Position 70 is an asparagine amide (N70).

This sequence belongs to the conotoxin A superfamily. Post-translationally, contains 3 disulfide bonds. They are not indicated here, since framework IV presents two different connectivities (I-V, II-III, IV-VI and I-III, II-V, IV-VI). In terms of tissue distribution, expressed by the venom duct.

It is found in the secreted. This is Conotoxin Bu24 from Conus bullatus (Bubble cone).